Here is a 311-residue protein sequence, read N- to C-terminus: Energy-coupling factor transporter ATP-binding protein EcfA2 (311 aa).

The 263-residue stretch at 3–265 folds into the ABC transporter domain; sequence IKLKDVKFTF…IAFLEENNLQ (263 aa). Residue 40–47 participates in ATP binding; sequence GQTGSGKT.

This sequence belongs to the ABC transporter superfamily. Energy-coupling factor EcfA family. In terms of assembly, forms a stable energy-coupling factor (ECF) transporter complex composed of 2 membrane-embedded substrate-binding proteins (S component), 2 ATP-binding proteins (A component) and 2 transmembrane proteins (T component).

Its subcellular location is the cell membrane. ATP-binding (A) component of a common energy-coupling factor (ECF) ABC-transporter complex. Unlike classic ABC transporters this ECF transporter provides the energy necessary to transport a number of different substrates. The protein is Energy-coupling factor transporter ATP-binding protein EcfA2 of Mycoplasmopsis synoviae (strain 53) (Mycoplasma synoviae).